Reading from the N-terminus, the 393-residue chain is SET domain-containing protein DDB_G0283443 (393 aa).

Residues 17–312 (KKIEINETLE…KGDELSISYI (296 aa)) form the SET domain.

Belongs to the class V-like SAM-binding methyltransferase superfamily.

Functionally, probable methyltransferase. The sequence is that of SET domain-containing protein DDB_G0283443 from Dictyostelium discoideum (Social amoeba).